The following is a 489-amino-acid chain: MTARTLMIQGTGSDVGKSLIVAGLSRAFARRGLRVRPFKPQNMSNNAAVTAEGGEIGRAQALQARAACVAPSVHMNPVLLKPQSETGSQVVVQGRRVGTAKAREYQAWKPRLLSAVLDSFDHLRAEADLVLVEGAGSASEVNLRAGDIANMGFARASGTPVVLLGDIDRGGVIASLVGTKAVLDPDDAAMIRGFLVNRFRGDPSLFADGMALIAARTGWAALGLIPHFPEAARLPAEDVLGLKGSVRPSARPGARVIAVPVLPRIANFDDLDPLRAEPGVSVVLVEPGRPLPAEADLVLLPGSKTTIADLIAFRAEGWDIDLAAHVRRGGRVLGLCGGYQMLGRRIEDPHGIEGEVRAVDGLGLLDVVTVMTPDKRLAAVTGASLPDETPFCGYEMHLGETRGPDAARPLLRFADGRPDGAVSADGRVCGTYVHGLFADDRQRALWLERLGTSSAGEAYEAGIDAVLDRLAEHLERHVACDALLALAAG.

In terms of domain architecture, GATase cobBQ-type spans 254 to 442 (ARVIAVPVLP…VHGLFADDRQ (189 aa)). Cys336 serves as the catalytic Nucleophile. His434 is an active-site residue.

It belongs to the CobB/CobQ family. CobQ subfamily.

Its pathway is cofactor biosynthesis; adenosylcobalamin biosynthesis. Its function is as follows. Catalyzes amidations at positions B, D, E, and G on adenosylcobyrinic A,C-diamide. NH(2) groups are provided by glutamine, and one molecule of ATP is hydrogenolyzed for each amidation. This Methylobacterium nodulans (strain LMG 21967 / CNCM I-2342 / ORS 2060) protein is Cobyric acid synthase.